A 29-amino-acid chain; its full sequence is Cytochrome b6-f complex subunit 8 (29 aa).

A helical transmembrane segment spans residues 3-23 (IVSLAWAALMVVFSFSLSLVV).

Belongs to the PetN family. In terms of assembly, the 4 large subunits of the cytochrome b6-f complex are cytochrome b6, subunit IV (17 kDa polypeptide, PetD), cytochrome f and the Rieske protein, while the 4 small subunits are PetG, PetL, PetM and PetN. The complex functions as a dimer.

The protein resides in the plastid. It is found in the chloroplast thylakoid membrane. Functionally, component of the cytochrome b6-f complex, which mediates electron transfer between photosystem II (PSII) and photosystem I (PSI), cyclic electron flow around PSI, and state transitions. This is Cytochrome b6-f complex subunit 8 from Glycine max (Soybean).